The primary structure comprises 260 residues: Late transcription factor 1 (260 aa).

It belongs to the chordopoxvirinae VLTF-1 family. In terms of assembly, interacts with the late transcription factors VLTF-2 and VLTF-3. Interacts with the late transcription elongation factor VLTF-4. Interacts with itself.

Its function is as follows. Associates with RNA polymerase to initiate transcription from late gene promoters. The protein is Late transcription factor 1 (OPG093) of Homo sapiens (Human).